A 109-amino-acid chain; its full sequence is Cell division protein ZapA (109 aa).

Positions P21–R99 form a coiled coil.

Belongs to the ZapA family. Type 1 subfamily. As to quaternary structure, homodimer. Interacts with FtsZ.

The protein resides in the cytoplasm. Functionally, activator of cell division through the inhibition of FtsZ GTPase activity, therefore promoting FtsZ assembly into bundles of protofilaments necessary for the formation of the division Z ring. It is recruited early at mid-cell but it is not essential for cell division. In Shigella boydii serotype 18 (strain CDC 3083-94 / BS512), this protein is Cell division protein ZapA.